The chain runs to 296 residues: Protoheme IX farnesyltransferase (296 aa).

The Cytoplasmic portion of the chain corresponds to 1 to 9; sequence MIFKQYLQV. Residues 10–28 form a helical membrane-spanning segment; that stretch reads TKPGIIFGNLISVIGGFLL. The Periplasmic portion of the chain corresponds to 29 to 37; the sequence is ASKGSIDYP. A helical membrane pass occupies residues 38-56; it reads LFIYTLVGVSLVVASGCVF. Residues 57–78 are Cytoplasmic-facing; that stretch reads NNYIDRDIDRKMERTKNRVLVK. A helical transmembrane segment spans residues 79-97; it reads GLISPAVSLVYATLLGIAG. The Periplasmic portion of the chain corresponds to 98–107; the sequence is FMLLWFGANP. A helical membrane pass occupies residues 108-126; that stretch reads LACWLGVMGFVVYVGVYSL. The Cytoplasmic portion of the chain corresponds to 127-197; that stretch reads YMKRHSVYGT…YQAANIPVLP (71 aa). The helical transmembrane segment at 198–216 threads the bilayer; the sequence is VVKGISVAKNHITLYIIAF. The Periplasmic segment spans residues 217–228; the sequence is AVATLMLSLGGY. A helical membrane pass occupies residues 229 to 247; that stretch reads AGYKYLVVAAAVSVWWLGM. The Cytoplasmic segment spans residues 248–268; it reads ALRGYKVADDRIWARKLFGFS. A helical membrane pass occupies residues 269–287; it reads IIAITALSVMMSVDFMVPD. Residues 288-296 lie on the Periplasmic side of the membrane; it reads SHTLLAAVW.

It belongs to the UbiA prenyltransferase family. Protoheme IX farnesyltransferase subfamily.

It is found in the cell inner membrane. The catalysed reaction is heme b + (2E,6E)-farnesyl diphosphate + H2O = Fe(II)-heme o + diphosphate. It participates in porphyrin-containing compound metabolism; heme O biosynthesis; heme O from protoheme: step 1/1. Its function is as follows. Converts heme B (protoheme IX) to heme O by substitution of the vinyl group on carbon 2 of heme B porphyrin ring with a hydroxyethyl farnesyl side group. The sequence is that of Protoheme IX farnesyltransferase from Escherichia coli O1:K1 / APEC.